The sequence spans 174 residues: Large ribosomal subunit protein bL12cz (174 aa).

The transit peptide at 1 to 45 directs the protein to the chloroplast; sequence MASTTFSSAFSILSLPSSSPSPPPSPPRTLPVANRRRRAAAVAST. Residues 1–46 form a disordered region; the sequence is MASTTFSSAFSILSLPSSSPSPPPSPPRTLPVANRRRRAAAVASTA. Residues 7–18 are compositionally biased toward low complexity; it reads SSAFSILSLPSS. Over residues 19–29 the composition is skewed to pro residues; sequence SPSPPPSPPRT.

It belongs to the bacterial ribosomal protein bL12 family.

The protein resides in the plastid. The protein localises to the chloroplast. The chain is Large ribosomal subunit protein bL12cz (RPL12-1) from Secale cereale (Rye).